A 201-amino-acid polypeptide reads, in one-letter code: Recombination protein RecR (201 aa).

A C4-type zinc finger spans residues 60–75; that stretch reads CQVCGNVDVRDPCTVC. The 96-residue stretch at 83–178 folds into the Toprim domain; it reads SVLVVVAEVA…KVTRLAHGVP (96 aa).

It belongs to the RecR family.

May play a role in DNA repair. It seems to be involved in an RecBC-independent recombinational process of DNA repair. It may act with RecF and RecO. This is Recombination protein RecR from Azorhizobium caulinodans (strain ATCC 43989 / DSM 5975 / JCM 20966 / LMG 6465 / NBRC 14845 / NCIMB 13405 / ORS 571).